The following is a 177-amino-acid chain: Adenine phosphoribosyltransferase (177 aa).

The protein belongs to the purine/pyrimidine phosphoribosyltransferase family. Homodimer.

The protein resides in the cytoplasm. The enzyme catalyses AMP + diphosphate = 5-phospho-alpha-D-ribose 1-diphosphate + adenine. The protein operates within purine metabolism; AMP biosynthesis via salvage pathway; AMP from adenine: step 1/1. Functionally, catalyzes a salvage reaction resulting in the formation of AMP, that is energically less costly than de novo synthesis. The polypeptide is Adenine phosphoribosyltransferase (Leptospira biflexa serovar Patoc (strain Patoc 1 / Ames)).